A 219-amino-acid polypeptide reads, in one-letter code: Response regulator ArlR (219 aa).

One can recognise a Response regulatory domain in the interval 3-116 (QILIVEDEQN…ELLARIRAIL (114 aa)). Residue D52 is modified to 4-aspartylphosphate. The ompR/PhoB-type DNA-binding region spans 122 to 219 (KDIIDVNGIT…TVRGVGYVIR (98 aa)).

In terms of processing, phosphorylated by ArlS.

Its subcellular location is the cytoplasm. Its function is as follows. Member of the two-component regulatory system ArlS/ArlR involved in the regulation of adhesion, autolysis, multidrug resistance and virulence. The protein is Response regulator ArlR (arlR) of Staphylococcus aureus (strain USA300).